Here is a 400-residue protein sequence, read N- to C-terminus: SEC14-like protein 3 (400 aa).

Residues 76 to 249 (PPEVIQKYMP…QFGGTLTDPD (174 aa)) enclose the CRAL-TRIO domain. The GOLD domain maps to 275-383 (KTQYEHSVQI…AKKVSFTVEV (109 aa)).

Its function is as follows. Probable hydrophobic ligand-binding protein; may play a role in the transport of hydrophobic ligands like tocopherol, squalene and phospholipids. The protein is SEC14-like protein 3 (SEC14L3) of Homo sapiens (Human).